Here is a 347-residue protein sequence, read N- to C-terminus: Protein RecA (347 aa).

ATP is bound at residue 67-74; the sequence is GPESSGKT.

The protein belongs to the RecA family. The protein migrates as a 40 kDa protein in strains 69A and NCTC 11637. When overexpressed in E.coli a 38 kDa protein is made which is unable to complement the E.coli deletion mutant. It has been suggested this size difference is due to a post-translational modification.

The protein resides in the cytoplasm. Can catalyze the hydrolysis of ATP in the presence of single-stranded DNA, the ATP-dependent uptake of single-stranded DNA by duplex DNA, and the ATP-dependent hybridization of homologous single-stranded DNAs. It interacts with LexA causing its activation and leading to its autocatalytic cleavage. Its function is as follows. Deletion of this gene leads to the inability of the bacteria to perform homologous recombination, and markedly increases UV sensitivity. The sequence is that of Protein RecA from Helicobacter pylori (strain ATCC 700392 / 26695) (Campylobacter pylori).